Consider the following 158-residue polypeptide: 2-C-methyl-D-erythritol 2,4-cyclodiphosphate synthase (158 aa).

A divalent metal cation-binding residues include Asp-9 and His-11. 4-CDP-2-C-methyl-D-erythritol 2-phosphate is bound by residues 9–11 and 35–36; these read DVH and HS. His-43 contributes to the a divalent metal cation binding site. 4-CDP-2-C-methyl-D-erythritol 2-phosphate contacts are provided by residues 57–59, 62–66, 101–107, 133–136, Phe-140, and Arg-143; these read DIG, FPDTD, AQKPKMA, and TTTE.

It belongs to the IspF family. In terms of assembly, homotrimer. A divalent metal cation is required as a cofactor.

It carries out the reaction 4-CDP-2-C-methyl-D-erythritol 2-phosphate = 2-C-methyl-D-erythritol 2,4-cyclic diphosphate + CMP. Its pathway is isoprenoid biosynthesis; isopentenyl diphosphate biosynthesis via DXP pathway; isopentenyl diphosphate from 1-deoxy-D-xylulose 5-phosphate: step 4/6. Its function is as follows. Involved in the biosynthesis of isopentenyl diphosphate (IPP) and dimethylallyl diphosphate (DMAPP), two major building blocks of isoprenoid compounds. Catalyzes the conversion of 4-diphosphocytidyl-2-C-methyl-D-erythritol 2-phosphate (CDP-ME2P) to 2-C-methyl-D-erythritol 2,4-cyclodiphosphate (ME-CPP) with a corresponding release of cytidine 5-monophosphate (CMP). The polypeptide is 2-C-methyl-D-erythritol 2,4-cyclodiphosphate synthase (Bacillus cereus (strain ATCC 10987 / NRS 248)).